The following is a 179-amino-acid chain: Large ribosomal subunit protein uL5 (179 aa).

Belongs to the universal ribosomal protein uL5 family. Part of the 50S ribosomal subunit; part of the 5S rRNA/L5/L18/L25 subcomplex. Contacts the 5S rRNA and the P site tRNA. Forms a bridge to the 30S subunit in the 70S ribosome.

Functionally, this is one of the proteins that bind and probably mediate the attachment of the 5S RNA into the large ribosomal subunit, where it forms part of the central protuberance. In the 70S ribosome it contacts protein S13 of the 30S subunit (bridge B1b), connecting the 2 subunits; this bridge is implicated in subunit movement. Contacts the P site tRNA; the 5S rRNA and some of its associated proteins might help stabilize positioning of ribosome-bound tRNAs. This Desulforapulum autotrophicum (strain ATCC 43914 / DSM 3382 / VKM B-1955 / HRM2) (Desulfobacterium autotrophicum) protein is Large ribosomal subunit protein uL5.